Consider the following 469-residue polypeptide: 3-isopropylmalate dehydratase large subunit (469 aa).

The [4Fe-4S] cluster site is built by cysteine 347, cysteine 407, and cysteine 410.

This sequence belongs to the aconitase/IPM isomerase family. LeuC type 1 subfamily. Heterodimer of LeuC and LeuD. Requires [4Fe-4S] cluster as cofactor.

It catalyses the reaction (2R,3S)-3-isopropylmalate = (2S)-2-isopropylmalate. Its pathway is amino-acid biosynthesis; L-leucine biosynthesis; L-leucine from 3-methyl-2-oxobutanoate: step 2/4. Functionally, catalyzes the isomerization between 2-isopropylmalate and 3-isopropylmalate, via the formation of 2-isopropylmaleate. This is 3-isopropylmalate dehydratase large subunit from Proteus mirabilis (strain HI4320).